Reading from the N-terminus, the 203-residue chain is Glycerol-3-phosphate acyltransferase (203 aa).

The next 6 helical transmembrane spans lie at Ile-5–Leu-25, Thr-50–Pro-70, Ile-72–Met-92, Val-115–Phe-135, Ile-140–Leu-160, and Leu-162–Phe-182.

It belongs to the PlsY family. As to quaternary structure, probably interacts with PlsX.

It is found in the cell membrane. It carries out the reaction an acyl phosphate + sn-glycerol 3-phosphate = a 1-acyl-sn-glycero-3-phosphate + phosphate. Its pathway is lipid metabolism; phospholipid metabolism. In terms of biological role, catalyzes the transfer of an acyl group from acyl-phosphate (acyl-PO(4)) to glycerol-3-phosphate (G3P) to form lysophosphatidic acid (LPA). This enzyme utilizes acyl-phosphate as fatty acyl donor, but not acyl-CoA or acyl-ACP. The polypeptide is Glycerol-3-phosphate acyltransferase (Roseiflexus sp. (strain RS-1)).